Here is a 431-residue protein sequence, read N- to C-terminus: Ribosomal protein uS12 methylthiotransferase RimO (431 aa).

Residues 4 to 120 form the MTTase N-terminal domain; it reads HKLFLLSLGC…ILAALGAAYH (117 aa). C13, C49, C83, C144, C148, and C151 together coordinate [4Fe-4S] cluster. In terms of domain architecture, Radical SAM core spans 130–359; the sequence is LTPPHYTYLK…MELQESVSQD (230 aa). Positions 362–429 constitute a TRAM domain; it reads RDFEGKEITV…PFDLVGEVIG (68 aa).

It belongs to the methylthiotransferase family. RimO subfamily. [4Fe-4S] cluster is required as a cofactor.

The protein resides in the cytoplasm. It carries out the reaction L-aspartate(89)-[ribosomal protein uS12]-hydrogen + (sulfur carrier)-SH + AH2 + 2 S-adenosyl-L-methionine = 3-methylsulfanyl-L-aspartate(89)-[ribosomal protein uS12]-hydrogen + (sulfur carrier)-H + 5'-deoxyadenosine + L-methionine + A + S-adenosyl-L-homocysteine + 2 H(+). Catalyzes the methylthiolation of an aspartic acid residue of ribosomal protein uS12. This is Ribosomal protein uS12 methylthiotransferase RimO from Pelodictyon phaeoclathratiforme (strain DSM 5477 / BU-1).